The following is a 74-amino-acid chain: ATP synthase subunit c (74 aa).

Helical transmembrane passes span 5-25 (LAYIGAGLAGMGTGIAALGVG) and 49-69 (LFIGIAFAEALGIFSFLVALL).

The protein belongs to the ATPase C chain family. As to quaternary structure, F-type ATPases have 2 components, F(1) - the catalytic core - and F(0) - the membrane proton channel. F(1) has five subunits: alpha(3), beta(3), gamma(1), delta(1), epsilon(1). F(0) has three main subunits: a(1), b(2) and c(10-14). The alpha and beta chains form an alternating ring which encloses part of the gamma chain. F(1) is attached to F(0) by a central stalk formed by the gamma and epsilon chains, while a peripheral stalk is formed by the delta and b chains.

The protein localises to the cell inner membrane. F(1)F(0) ATP synthase produces ATP from ADP in the presence of a proton or sodium gradient. F-type ATPases consist of two structural domains, F(1) containing the extramembraneous catalytic core and F(0) containing the membrane proton channel, linked together by a central stalk and a peripheral stalk. During catalysis, ATP synthesis in the catalytic domain of F(1) is coupled via a rotary mechanism of the central stalk subunits to proton translocation. Its function is as follows. Key component of the F(0) channel; it plays a direct role in translocation across the membrane. A homomeric c-ring of between 10-14 subunits forms the central stalk rotor element with the F(1) delta and epsilon subunits. This Ruegeria sp. (strain TM1040) (Silicibacter sp.) protein is ATP synthase subunit c.